The sequence spans 954 residues: Mitogen-activated protein kinase kinase kinase 10 (954 aa).

The region spanning 16–81 (PAGPVWTAVF…PSNYVAPGAP (66 aa)) is the SH3 domain. The 263-residue stretch at 98–360 (LQLEEIIGVG…GSILKRLEVI (263 aa)) folds into the Protein kinase domain. ATP contacts are provided by residues 104-112 (IGVGGFGKV) and lysine 125. The Proton acceptor role is filled by aspartate 222. Threonine 258 carries the post-translational modification Phosphothreonine; by autocatalysis. Serine 262 is modified (phosphoserine; by autocatalysis and MAP4K1). 2 leucine-zipper regions span residues 384–405 (IQHM…EEEL) and 419–440 (LRRR…ELHL). Disordered regions lie at residues 490–665 (PTLD…RWGH), 716–739 (RFPR…PGLG), and 757–954 (STRS…HGSH). 3 positions are modified to phosphoserine: serine 498, serine 502, and serine 506. The segment covering 501–511 (ASPPASPSIIP) has biased composition (low complexity). Position 558 is a phosphothreonine (threonine 558). Over residues 566 to 578 (QKERVGGEERLKG) the composition is skewed to basic and acidic residues. The segment covering 611 to 620 (EMEEFAEAED) has biased composition (acidic residues). Residues 631 to 640 (STPSYLSVPL) are compositionally biased toward low complexity. Positions 773–790 (APSPPPSPPAPTPTPSPS) are enriched in pro residues. Arginine 857 is subject to Omega-N-methylarginine. Over residues 913 to 927 (PSRPDTPESPGPPSV) the composition is skewed to pro residues.

It belongs to the protein kinase superfamily. STE Ser/Thr protein kinase family. MAP kinase kinase kinase subfamily. As to quaternary structure, homodimer. Interacts with SH3RF2. Mg(2+) is required as a cofactor. In terms of processing, autophosphorylation on serine and threonine residues within the activation loop plays a role in enzyme activation. Expressed in brain and skeletal muscle.

It carries out the reaction L-seryl-[protein] + ATP = O-phospho-L-seryl-[protein] + ADP + H(+). The enzyme catalyses L-threonyl-[protein] + ATP = O-phospho-L-threonyl-[protein] + ADP + H(+). Its activity is regulated as follows. Homodimerization via the leucine zipper domains is required for autophosphorylation and subsequent activation. Functionally, activates the JUN N-terminal pathway. The sequence is that of Mitogen-activated protein kinase kinase kinase 10 (MAP3K10) from Homo sapiens (Human).